Reading from the N-terminus, the 213-residue chain is Virion protein US10 homolog (213 aa).

The protein belongs to the herpesviridae US10 family. In terms of processing, phosphorylated.

The protein resides in the virion tegument. It localises to the host nucleus matrix. In Gallid herpesvirus 2 (strain GA) (GaHV-2), this protein is Virion protein US10 homolog (US639).